A 224-amino-acid chain; its full sequence is Germin-like protein 8-9 (224 aa).

Residues 1 to 22 form the signal peptide; it reads MASPSFCLFAALLALVSWQAIA. An intrachain disulfide couples Cys32 to Cys47. Positions 62-212 constitute a Cupin type-1 domain; the sequence is AMLDTPRKTN…AFQVGKGTID (151 aa). The N-linked (GlcNAc...) asparagine glycan is linked to Asn76. Residues His109, His111, and Glu116 each contribute to the Mn(2+) site. Residue Asn135 is glycosylated (N-linked (GlcNAc...) asparagine). Position 157 (His157) interacts with Mn(2+).

It belongs to the germin family. Oligomer (believed to be a pentamer but probably hexamer).

The protein resides in the secreted. It localises to the extracellular space. Its subcellular location is the apoplast. Functionally, plays a role in broad-spectrum disease resistance. Probably has no oxalate oxidase activity even if the active site is conserved. The chain is Germin-like protein 8-9 from Oryza sativa subsp. japonica (Rice).